A 292-amino-acid polypeptide reads, in one-letter code: Protein/nucleic acid deglycase HchA (292 aa).

Over residues 1 to 12 (MSQDVNELSKQP) the composition is skewed to polar residues. Residues 1–23 (MSQDVNELSKQPTPDKAEDNAFF) are disordered. The active-site Nucleophile is the Cys190.

It belongs to the peptidase C56 family. HchA subfamily.

The protein localises to the cytoplasm. The catalysed reaction is N(omega)-(1-hydroxy-2-oxopropyl)-L-arginyl-[protein] + H2O = lactate + L-arginyl-[protein] + H(+). It catalyses the reaction N(6)-(1-hydroxy-2-oxopropyl)-L-lysyl-[protein] + H2O = lactate + L-lysyl-[protein] + H(+). The enzyme catalyses S-(1-hydroxy-2-oxopropyl)-L-cysteinyl-[protein] + H2O = lactate + L-cysteinyl-[protein] + H(+). It carries out the reaction N(omega)-(1-hydroxy-2-oxoethyl)-L-arginyl-[protein] + H2O = L-arginyl-[protein] + glycolate + H(+). The catalysed reaction is N(6)-(1-hydroxy-2-oxoethyl)-L-lysyl-[protein] + H2O = glycolate + L-lysyl-[protein] + H(+). It catalyses the reaction S-(1-hydroxy-2-oxoethyl)-L-cysteinyl-[protein] + H2O = glycolate + L-cysteinyl-[protein] + H(+). The enzyme catalyses N(2)-(1-hydroxy-2-oxopropyl)-dGTP + H2O = lactate + dGTP + H(+). It carries out the reaction N(2)-(1-hydroxy-2-oxopropyl)-GTP + H2O = lactate + GTP + H(+). The catalysed reaction is N(2)-(1-hydroxy-2-oxopropyl)-GDP + H2O = lactate + GDP + H(+). It catalyses the reaction N(2)-(1-hydroxy-2-oxopropyl)-GMP + H2O = lactate + GMP + H(+). The enzyme catalyses N(2)-(1-hydroxy-2-oxoethyl)-dGTP + H2O = dGTP + glycolate + H(+). It carries out the reaction N(2)-(1-hydroxy-2-oxoethyl)-GTP + H2O = glycolate + GTP + H(+). The catalysed reaction is N(2)-(1-hydroxy-2-oxoethyl)-GDP + H2O = glycolate + GDP + H(+). It catalyses the reaction N(2)-(1-hydroxy-2-oxoethyl)-GMP + H2O = glycolate + GMP + H(+). The enzyme catalyses an N(2)-(1-hydroxy-2-oxopropyl)-guanosine in RNA + H2O = a guanosine in RNA + lactate + H(+). It carries out the reaction an N(2)-(1-hydroxy-2-oxopropyl)-2'-deoxyguanosine in DNA + H2O = a 2'-deoxyguanosine in DNA + lactate + H(+). The catalysed reaction is an N(2)-(1-hydroxy-2-oxoethyl)-guanosine in RNA + H2O = a guanosine in RNA + glycolate + H(+). It catalyses the reaction an N(2)-(1-hydroxy-2-oxoethyl)-2'-deoxyguanosine in DNA + H2O = a 2'-deoxyguanosine in DNA + glycolate + H(+). In terms of biological role, protein and nucleotide deglycase that catalyzes the deglycation of the Maillard adducts formed between amino groups of proteins or nucleotides and reactive carbonyl groups of glyoxals. Thus, functions as a protein deglycase that repairs methylglyoxal- and glyoxal-glycated proteins, and releases repaired proteins and lactate or glycolate, respectively. Deglycates cysteine, arginine and lysine residues in proteins, and thus reactivates these proteins by reversing glycation by glyoxals. Acts on early glycation intermediates (hemithioacetals and aminocarbinols), preventing the formation of Schiff bases and advanced glycation endproducts (AGE). Also functions as a nucleotide deglycase able to repair glycated guanine in the free nucleotide pool (GTP, GDP, GMP, dGTP) and in DNA and RNA. Is thus involved in a major nucleotide repair system named guanine glycation repair (GG repair), dedicated to reversing methylglyoxal and glyoxal damage via nucleotide sanitization and direct nucleic acid repair. Plays an important role in protecting cells from carbonyl stress. The polypeptide is Protein/nucleic acid deglycase HchA (Staphylococcus aureus (strain Newman)).